The sequence spans 341 residues: Dye-decolorizing peroxidase (341 aa).

Catalysis depends on D148, which acts as the Proton acceptor. Position 221 (H221) interacts with heme. The interval 304 to 341 (FLDDPPDAPTRLVPEATFTAPISDGSLGIGSLKRSAQQ) is targeting peptide.

The protein belongs to the DyP-type peroxidase family. In terms of assembly, homohexamer. It depends on heme b as a cofactor.

It localises to the encapsulin nanocompartment. Functionally, cargo protein of a type 1 encapsulin nanocompartment. Has both general peroxidase activity and dye-decolorizing activity. Can catalyze the oxidation of both protoporphyrinogen IX and coproporphyrinogen III to their corresponding porphyrins. Also efficiently decolorizes the dyes alizarin red and Cibacron blue F3GA. This cargo-loaded encapsulin nanocompartment is probably involved in protection against oxidative damage. This is Dye-decolorizing peroxidase from Rhodococcus erythropolis (strain PR4 / NBRC 100887).